The following is a 414-amino-acid chain: Phosphoglycerate kinase (414 aa).

Substrate is bound by residues 20–22, Arg-37, 60–63, Arg-117, and Arg-164; these read DIN and HQSR. ATP is bound by residues Glu-338 and 364-367; that span reads GGHL.

This sequence belongs to the phosphoglycerate kinase family. In terms of assembly, monomer.

It is found in the cytoplasm. It catalyses the reaction (2R)-3-phosphoglycerate + ATP = (2R)-3-phospho-glyceroyl phosphate + ADP. It participates in carbohydrate degradation; glycolysis; pyruvate from D-glyceraldehyde 3-phosphate: step 2/5. The chain is Phosphoglycerate kinase from Methanococcus maripaludis (strain DSM 14266 / JCM 13030 / NBRC 101832 / S2 / LL).